A 180-amino-acid polypeptide reads, in one-letter code: Orotate phosphoribosyltransferase (180 aa).

Residues Arg-95, Lys-96, Lys-99, and 121–129 (EDVTTTGGS) contribute to the 5-phospho-alpha-D-ribose 1-diphosphate site. 2 residues coordinate orotate: Thr-125 and Arg-153.

The protein belongs to the purine/pyrimidine phosphoribosyltransferase family. PyrE subfamily. As to quaternary structure, homodimer. It depends on Mg(2+) as a cofactor.

The enzyme catalyses orotidine 5'-phosphate + diphosphate = orotate + 5-phospho-alpha-D-ribose 1-diphosphate. The protein operates within pyrimidine metabolism; UMP biosynthesis via de novo pathway; UMP from orotate: step 1/2. Catalyzes the transfer of a ribosyl phosphate group from 5-phosphoribose 1-diphosphate to orotate, leading to the formation of orotidine monophosphate (OMP). The sequence is that of Orotate phosphoribosyltransferase from Methanothermobacter thermautotrophicus (strain ATCC 29096 / DSM 1053 / JCM 10044 / NBRC 100330 / Delta H) (Methanobacterium thermoautotrophicum).